The chain runs to 263 residues: uncharacterized protein (263 aa).

The segment at 183 to 263 is disordered; that stretch reads APHDRPEGVP…PPSTNTKGAA (81 aa). 2 stretches are compositionally biased toward polar residues: residues 230–239 and 253–263; these read SRPTAPSRPS and TPPSTNTKGAA.

In terms of biological role, probably does not play a direct role in plasmid integration or excision. This is an uncharacterized protein from Saccharopolyspora erythraea (Streptomyces erythraeus).